Consider the following 207-residue polypeptide: Ras-related protein Rab-8A (207 aa).

GTP contacts are provided by S17, G18, V19, G20, K21, T22, C23, S39, and T40. Position 22 (T22) interacts with Mg(2+). 2 short sequence motifs (switch) span residues 31–45 (DAFNATFISTIGIDF) and 63–80 (DTAGQERFRTITTAYYRG). T40 and D63 together coordinate Mg(2+). 6 residues coordinate GTP: G66, N121, K122, D124, A152, and K153. Position 204 is a cysteine methyl ester (C204). C204 is lipidated: S-geranylgeranyl cysteine. Residues 205–207 (VLL) constitute a propeptide, removed in mature form.

The protein belongs to the small GTPase superfamily. Rab family. Mg(2+) is required as a cofactor.

The protein resides in the cell membrane. The protein localises to the golgi apparatus. It is found in the endosome membrane. Its subcellular location is the recycling endosome membrane. It localises to the cell projection. The protein resides in the cilium. The protein localises to the cytoplasmic vesicle. It is found in the phagosome membrane. Its subcellular location is the cytoplasm. It localises to the cytoskeleton. The protein resides in the microtubule organizing center. The protein localises to the centrosome. It is found in the centriole. Its subcellular location is the cilium basal body. It localises to the midbody. The catalysed reaction is GTP + H2O = GDP + phosphate + H(+). With respect to regulation, regulated by guanine nucleotide exchange factors (GEFs) which promote the exchange of bound GDP for free GTP, GTPase activating proteins (GAPs) which increase the GTP hydrolysis activity, and GDP dissociation inhibitors (GDIs) which inhibit the dissociation of the nucleotide from the GTPase. Activated in response to insulin. Functionally, the small GTPases Rab are key regulators of intracellular membrane trafficking, from the formation of transport vesicles to their fusion with membranes. Rabs cycle between an inactive GDP-bound form and an active GTP-bound form that is able to recruit to membranes different sets of downstream effectors directly responsible for vesicle formation, movement, tethering and fusion. RAB8A is involved in polarized vesicular trafficking and neurotransmitter release. Together with RAB11A, RAB3IP, the exocyst complex, PARD3, PRKCI, ANXA2, CDC42 and DNMBP promotes transcytosis of PODXL to the apical membrane initiation sites (AMIS), apical surface formation and lumenogenesis. Regulates the compacted morphology of the Golgi. Together with MYO5B and RAB11A participates in epithelial cell polarization. Also involved in membrane trafficking to the cilium and ciliogenesis. Together with MICALL2, may also regulate adherens junction assembly. May play a role in insulin-induced transport to the plasma membrane of the glucose transporter GLUT4 and therefore play a role in glucose homeostasis. Involved in autophagy. Participates in the export of a subset of neosynthesized proteins through a Rab8-Rab10-Rab11-dependent endososomal export route. Targeted to and stabilized on stressed lysosomes through LRRK2 phosphorylation. Suppresses stress-induced lysosomal enlargement through EHBP1 and EHNP1L1 effector proteins. The sequence is that of Ras-related protein Rab-8A (RAB8A) from Gallus gallus (Chicken).